We begin with the raw amino-acid sequence, 1435 residues long: Probable ATP-dependent DNA helicase HFM1 (1435 aa).

The region spanning Asp-290–Val-478 is the Helicase ATP-binding domain. Residue Ala-303–Thr-310 participates in ATP binding. The short motif at Asp-411–His-414 is the DEAH box element. In terms of domain architecture, Helicase C-terminal spans Ser-519–Arg-720. Residues Pro-777 to Val-1092 enclose the SEC63 domain. The disordered stretch occupies residues Lys-1109–Gly-1139. The C4-type zinc finger occupies Cys-1143–Cys-1158. Residues Gly-1295–Lys-1315 are disordered. Residues Phe-1296 to Gly-1306 show a composition bias toward polar residues.

This sequence belongs to the helicase family. SKI2 subfamily. Zn(2+) is required as a cofactor. As to expression, preferentially expressed in testis and ovary.

It carries out the reaction Couples ATP hydrolysis with the unwinding of duplex DNA by translocating in the 3'-5' direction.. The enzyme catalyses ATP + H2O = ADP + phosphate + H(+). Its function is as follows. Required for crossover formation and complete synapsis of homologous chromosomes during meiosis. The chain is Probable ATP-dependent DNA helicase HFM1 (HFM1) from Homo sapiens (Human).